The primary structure comprises 665 residues: Methionine--tRNA ligase (665 aa).

The 'HIGH' region signature appears at 16–26 (YYPSGKAHIGH). Positions 311–315 (KMSKS) match the 'KMSKS' region motif. Lysine 314 is an ATP binding site. The tRNA-binding domain maps to 564–665 (DFDKIDLRVA…SALPNGAKVK (102 aa)).

It belongs to the class-I aminoacyl-tRNA synthetase family. MetG type 2B subfamily. As to quaternary structure, homodimer.

The protein resides in the cytoplasm. The enzyme catalyses tRNA(Met) + L-methionine + ATP = L-methionyl-tRNA(Met) + AMP + diphosphate. Functionally, is required not only for elongation of protein synthesis but also for the initiation of all mRNA translation through initiator tRNA(fMet) aminoacylation. The protein is Methionine--tRNA ligase of Listeria monocytogenes serotype 4b (strain F2365).